The following is a 36-amino-acid chain: Asteropin-A (36 aa).

3 disulfides stabilise this stretch: Cys-2–Cys-18, Cys-9–Cys-25, and Cys-17–Cys-35.

Sialidase inhibitor. Competitively inhibits bacterial sialidases, but not viral sialidases. Does not inhibit glycosidases or proteases. Has no antitumor activity. The protein is Asteropin-A of Asteropus simplex (Marine sponge).